The primary structure comprises 126 residues: Phosphoribosyl-ATP pyrophosphatase (126 aa).

This sequence belongs to the PRA-PH family.

It localises to the cytoplasm. The enzyme catalyses 1-(5-phospho-beta-D-ribosyl)-ATP + H2O = 1-(5-phospho-beta-D-ribosyl)-5'-AMP + diphosphate + H(+). It functions in the pathway amino-acid biosynthesis; L-histidine biosynthesis; L-histidine from 5-phospho-alpha-D-ribose 1-diphosphate: step 2/9. The protein is Phosphoribosyl-ATP pyrophosphatase of Variovorax paradoxus (strain S110).